Reading from the N-terminus, the 337-residue chain is Hsp90 co-chaperone Cdc37-like 1 (337 aa).

The segment covering 1–11 (MEQPWPPPGPW) has biased composition (pro residues). A disordered region spans residues 1–40 (MEQPWPPPGPWSLPRAEGEAEEESDFDVFPSSPRCPQLPG). The self-association stretch occupies residues 2–171 (EQPWPPPGPW…YEQKIRHFGM (170 aa)). Phosphoserine is present on residues Ser32 and Ser88. A coiled-coil region spans residues 84–122 (HNSESLDQEHAKAQTAVSELRQREEEWRQKEEALVQREK). The tract at residues 147–277 (KDTEDEDKSE…SRVRLYSQSQ (131 aa)) is self-association and interaction with Hsp90. The tract at residues 267-337 (KSRVRLYSQS…DDEPKMMDTV (71 aa)) is interaction with Hsp70. Residues 278–337 (SFQPMTVQNHVPHSGVGSIGLLESLPQNPDYLQYSISTALCSLNSVVHKEDDEPKMMDTV) form a required for interaction with STIP1 region.

It belongs to the CDC37 family. As to quaternary structure, self-associates. Forms complexes with Hsp70 and Hsp90. Interacts with CDC37, FKBP4, PPID and STIP1. In terms of tissue distribution, expressed in brain, heart, kidney, liver, placenta and skeletal muscle.

It is found in the cytoplasm. Functionally, co-chaperone that binds to numerous proteins and promotes their interaction with Hsp70 and Hsp90. The chain is Hsp90 co-chaperone Cdc37-like 1 (CDC37L1) from Homo sapiens (Human).